We begin with the raw amino-acid sequence, 80 residues long: MFSRAQVRRALQRVPGKQRFGIYRFLPFFFVLGGAMEWIMIKVRVGQETFYDVYRRKASERQYQRRLEDTSETNLHKLIK.

Residues 1-19 (MFSRAQVRRALQRVPGKQR) are Mitochondrial matrix-facing. The helical transmembrane segment at 20–41 (FGIYRFLPFFFVLGGAMEWIMI) threads the bilayer. Residues 42–80 (KVRVGQETFYDVYRRKASERQYQRRLEDTSETNLHKLIK) are Mitochondrial intermembrane-facing.

This sequence belongs to the UQCC5 family. In terms of assembly, associates with the mitochondrial ribosome. Interacts with UQCC6. Interacts with MT-CYB; interacts with newly synthesizes MT-CYB. Forms a complex, named COMB/coordinator of mitochondrial CYTB biogenesis, composed of UQCC1, UQCC2, UQCC4, UQCC5 and UQCC6; stabilizes nascent cytochrome b/MT-CYB and promotes its membrane insertion.

The protein resides in the mitochondrion inner membrane. Functionally, required for the assembly and stability of the mitochondrial ubiquinol-cytochrome c reductase complex (complex III (CIII) or cytochrome b-c1 complex), a multisubunit transmembrane complex that is part of the mitochondrial electron transport chain (ETC) which drives oxidative phosphorylation. Mediates early complex III biogenesis. Participates in regulating the levels of electron transport chain proteins, and therefore energy supply, in response to changes in energy demand. Also required for cytochrome c oxidase complex (complex IV) assembly. The polypeptide is Ubiquinol-cytochrome c reductase complex assembly factor 5 (Mus musculus (Mouse)).